Consider the following 304-residue polypeptide: MSWIERIKSNITPTRKASIPEGVWTKCDSCGQVLYRAELERNLEVCPKCDHHMRMTARNRLHSLLDEGSLVELGSELEPKDVLKFRDSKKYKDRLASAQKETGEKDALVVMKGTLYGMPVVAAAFEFAFMGGSMGSVVGARFVRAVEQALEDNCPLICFSASGGARMQEALMSLMQMAKTSAALAKMQERGLPYISVLTDPTMGGVSASFAMLGDLNIAEPKALIGFAGPRVIEQTVREKLPLGFQRSEFLIEKGAIDMIVRRPEMRLKLASILAKLMNLPAPNPEAPREGVVVPPVPDQEPEA.

One can recognise a CoA carboxyltransferase N-terminal domain in the interval 23–292 (VWTKCDSCGQ…PNPEAPREGV (270 aa)). Positions 27, 30, 46, and 49 each coordinate Zn(2+). Residues 27–49 (CDSCGQVLYRAELERNLEVCPKC) form a C4-type zinc finger. The interval 284-304 (NPEAPREGVVVPPVPDQEPEA) is disordered. Residues 295–304 (PPVPDQEPEA) show a composition bias toward pro residues.

The protein belongs to the AccD/PCCB family. As to quaternary structure, acetyl-CoA carboxylase is a heterohexamer composed of biotin carboxyl carrier protein (AccB), biotin carboxylase (AccC) and two subunits each of ACCase subunit alpha (AccA) and ACCase subunit beta (AccD). Requires Zn(2+) as cofactor.

Its subcellular location is the cytoplasm. The enzyme catalyses N(6)-carboxybiotinyl-L-lysyl-[protein] + acetyl-CoA = N(6)-biotinyl-L-lysyl-[protein] + malonyl-CoA. It participates in lipid metabolism; malonyl-CoA biosynthesis; malonyl-CoA from acetyl-CoA: step 1/1. In terms of biological role, component of the acetyl coenzyme A carboxylase (ACC) complex. Biotin carboxylase (BC) catalyzes the carboxylation of biotin on its carrier protein (BCCP) and then the CO(2) group is transferred by the transcarboxylase to acetyl-CoA to form malonyl-CoA. The chain is Acetyl-coenzyme A carboxylase carboxyl transferase subunit beta from Shigella boydii serotype 18 (strain CDC 3083-94 / BS512).